We begin with the raw amino-acid sequence, 360 residues long: Phospho-N-acetylmuramoyl-pentapeptide-transferase (360 aa).

10 consecutive transmembrane segments (helical) span residues 18–38 (VFSY…VFSL), 73–93 (TMGG…WGDL), 97–117 (YVLV…IDDY), 134–154 (YILQ…SSTL), 168–188 (VMPQ…VGAS), 199–219 (GLAI…AYLS), 236–256 (AGEL…FLWF), 263–283 (VFMG…IAVL), 288–308 (ILLV…ILQV), and 338–358 (VIVR…ATLK).

The protein belongs to the glycosyltransferase 4 family. MraY subfamily. Mg(2+) is required as a cofactor.

It is found in the cell inner membrane. The enzyme catalyses UDP-N-acetyl-alpha-D-muramoyl-L-alanyl-gamma-D-glutamyl-meso-2,6-diaminopimeloyl-D-alanyl-D-alanine + di-trans,octa-cis-undecaprenyl phosphate = di-trans,octa-cis-undecaprenyl diphospho-N-acetyl-alpha-D-muramoyl-L-alanyl-D-glutamyl-meso-2,6-diaminopimeloyl-D-alanyl-D-alanine + UMP. The protein operates within cell wall biogenesis; peptidoglycan biosynthesis. In terms of biological role, catalyzes the initial step of the lipid cycle reactions in the biosynthesis of the cell wall peptidoglycan: transfers peptidoglycan precursor phospho-MurNAc-pentapeptide from UDP-MurNAc-pentapeptide onto the lipid carrier undecaprenyl phosphate, yielding undecaprenyl-pyrophosphoryl-MurNAc-pentapeptide, known as lipid I. This chain is Phospho-N-acetylmuramoyl-pentapeptide-transferase, found in Shewanella denitrificans (strain OS217 / ATCC BAA-1090 / DSM 15013).